Consider the following 222-residue polypeptide: 2-C-methyl-D-erythritol 4-phosphate cytidylyltransferase (222 aa).

Belongs to the IspD/TarI cytidylyltransferase family. IspD subfamily.

It catalyses the reaction 2-C-methyl-D-erythritol 4-phosphate + CTP + H(+) = 4-CDP-2-C-methyl-D-erythritol + diphosphate. The protein operates within isoprenoid biosynthesis; isopentenyl diphosphate biosynthesis via DXP pathway; isopentenyl diphosphate from 1-deoxy-D-xylulose 5-phosphate: step 2/6. Its function is as follows. Catalyzes the formation of 4-diphosphocytidyl-2-C-methyl-D-erythritol from CTP and 2-C-methyl-D-erythritol 4-phosphate (MEP). This Thermotoga sp. (strain RQ2) protein is 2-C-methyl-D-erythritol 4-phosphate cytidylyltransferase.